The primary structure comprises 79 residues: Exodeoxyribonuclease 7 small subunit (79 aa).

The protein belongs to the XseB family. Heterooligomer composed of large and small subunits.

Its subcellular location is the cytoplasm. It carries out the reaction Exonucleolytic cleavage in either 5'- to 3'- or 3'- to 5'-direction to yield nucleoside 5'-phosphates.. Its function is as follows. Bidirectionally degrades single-stranded DNA into large acid-insoluble oligonucleotides, which are then degraded further into small acid-soluble oligonucleotides. The protein is Exodeoxyribonuclease 7 small subunit of Lactococcus lactis subsp. lactis (strain IL1403) (Streptococcus lactis).